We begin with the raw amino-acid sequence, 375 residues long: Putative ZDHHC-type palmitoyltransferase 8 (375 aa).

The next 2 helical transmembrane spans lie at 4–24 (LFDFVVLSSFIILLPLVTDFL) and 40–60 (VVGMILVFFIVSLIFAGVSLW). N-linked (GlcNAc...) asparagine glycosylation occurs at asparagine 95. The next 3 membrane-spanning stretches (helical) occupy residues 105–125 (ITFYFHIFFTIQLVVNLYYYY), 221–241 (FILFIGYTVMALIYACYLSFF), and 285–305 (YSFIFLCCCLIVTASFGILLF). In terms of domain architecture, DHHC spans 176–226 (VSDGKWSTINKPKSHHCRICKRCIDSMDHHCPFAANCIGINNHHYFILFIG). Asparagine 343 carries an N-linked (GlcNAc...) asparagine glycan.

The protein belongs to the DHHC palmitoyltransferase family.

The protein localises to the membrane. It carries out the reaction L-cysteinyl-[protein] + hexadecanoyl-CoA = S-hexadecanoyl-L-cysteinyl-[protein] + CoA. The chain is Putative ZDHHC-type palmitoyltransferase 8 from Dictyostelium discoideum (Social amoeba).